Here is a 138-residue protein sequence, read N- to C-terminus: Growth factor (138 aa).

Positions 1-19 are cleaved as a signal peptide; that stretch reads MSMKYLMLLFAAMIIRSFA. An N-linked (GlcNAc...) asparagine; by host glycan is attached at Asn34. The EGF-like domain occupies 41-81; that stretch reads AIRLCGPEGDGYCLHGDCIHARDIDGMYCRCSHGYTGIRCQ. Cystine bridges form between Cys45/Cys58, Cys53/Cys69, and Cys71/Cys80. Residue Asn95 is glycosylated (N-linked (GlcNAc...) asparagine; by host).

This sequence belongs to the orthopoxvirus OPG019 family.

Its subcellular location is the secreted. In terms of biological role, stimulates cellular proliferation (hyperplasia)and mobility around infected cells to promote rapid and efficient spread of infection. In Rabbitpox virus (strain Utrecht) (RPV), this protein is Growth factor (OPG019).